Consider the following 86-residue polypeptide: U1-theraphotoxin-Pc1a (86 aa).

Positions 1 to 21 are cleaved as a signal peptide; the sequence is MMRVLIVTAVFTFFLVLTSSG. Positions 22–49 are excised as a propeptide; it reads HDEDNEQRNILEGMFLDRAIETPKGLEE. 3 disulfides stabilise this stretch: C53–C70, C60–C75, and C69–C80. V84 carries the valine amide modification.

Expressed by the venom gland.

It is found in the secreted. Possesses strong antiplasmodial activity against the intra-erythrocyte stage of P.falciparum in vitro. IC(50) for inhibiting P.falciparum growth is 1.59 uM. Interacts with infected and healthy erythrocytes. Does not lyse erythrocytes, is not cytotoxic to nucleated mammalian cells, and does not inhibit neuromuscular function. Has neither antibacterial nor antifungal activity. The polypeptide is U1-theraphotoxin-Pc1a (Psalmopoeus cambridgei (Trinidad chevron tarantula)).